A 234-amino-acid polypeptide reads, in one-letter code: Endonuclease NucS (234 aa).

Belongs to the NucS endonuclease family.

The protein resides in the cytoplasm. Its function is as follows. Cleaves both 3' and 5' ssDNA extremities of branched DNA structures. This chain is Endonuclease NucS, found in Bifidobacterium adolescentis (strain ATCC 15703 / DSM 20083 / NCTC 11814 / E194a).